We begin with the raw amino-acid sequence, 179 residues long: Large ribosomal subunit protein uL6 (179 aa).

It belongs to the universal ribosomal protein uL6 family. As to quaternary structure, part of the 50S ribosomal subunit.

Functionally, this protein binds to the 23S rRNA, and is important in its secondary structure. It is located near the subunit interface in the base of the L7/L12 stalk, and near the tRNA binding site of the peptidyltransferase center. The polypeptide is Large ribosomal subunit protein uL6 (Rhodococcus jostii (strain RHA1)).